A 462-amino-acid chain; its full sequence is Putative endoglucanase type B (462 aa).

A signal peptide spans 1-16; the sequence is MAYKLILAAFAATALA. Positions 25–61 constitute a CBM1 domain; sequence CSNGVWAQCGGQNWSGTPCCTSGNKCVKLNDFYSQCQ. Cystine bridges form between Cys-33-Cys-50 and Cys-44-Cys-60. N-linked (GlcNAc...) asparagine glycosylation occurs at Asn-37. Over residues 64–100 the composition is skewed to low complexity; it reads SAEPSSTAAGPSSTTATKTTATGGSSTTAGGSVTSAP. The disordered stretch occupies residues 64–102; the sequence is SAEPSSTAAGPSSTTATKTTATGGSSTTAGGSVTSAPPA. The tract at residues 66–99 is linker; that stretch reads EPSSTAAGPSSTTATKTTATGGSSTTAGGSVTSA. Positions 100-462 are catalytic; that stretch reads PPAASDNPYA…LLDNANPSFL (363 aa). Residue Asp-190 is part of the active site. Cys-191 and Cys-250 are disulfide-bonded. N-linked (GlcNAc...) asparagine glycosylation occurs at Asn-223. The active-site Proton donor is Asp-236. N-linked (GlcNAc...) asparagine glycans are attached at residues Asn-272 and Asn-317. Cysteines 383 and 430 form a disulfide. The active-site Nucleophile is Asp-416.

It belongs to the glycosyl hydrolase 6 (cellulase B) family.

It carries out the reaction Endohydrolysis of (1-&gt;4)-beta-D-glucosidic linkages in cellulose, lichenin and cereal beta-D-glucans.. The protein is Putative endoglucanase type B of Fusarium oxysporum (Fusarium vascular wilt).